The chain runs to 904 residues: E3 ubiquitin-protein ligase ZNF598 (904 aa).

An RING-type zinc finger spans residues 29-69 (CVLCCGDLEATALGRCDHPVCYRCSTKMRVLCEQRYCAVCR). Residues 187–210 (PLCKFCDERYLDNDELLKHLRRDH) form a C2H2-type zinc finger. At Tyr-306 the chain carries Phosphotyrosine. 2 disordered regions span residues 312 to 469 (YSRQ…GLAL) and 490 to 656 (VSSV…LPRP). Over residues 346-358 (AAAVRASVAAQQQ) the composition is skewed to low complexity. Basic and acidic residues predominate over residues 359–388 (EEARRSEDQEEGGRPKKEEAAARGPEDPRG). Residues 404–416 (ETSTNGPVSQEAF) show a composition bias toward polar residues. A compositionally biased stretch (low complexity) spans 418–431 (VTGPAAPGCVGVPG). Phosphoserine occurs at positions 428, 431, and 437. 2 stretches are compositionally biased toward low complexity: residues 447-461 (SLSA…TAAT) and 502-513 (SLVSAWNSSSSS). The segment covering 521–531 (LSAQATGSGQP) has biased composition (polar residues). Positions 534 to 543 (KAGKGSRGGR) are enriched in basic residues. Residues 564 to 584 (LLSTRPTGSVSSTLGLASIQP) are compositionally biased toward polar residues.

It belongs to the ZNF598/HEL2 family. As to quaternary structure, interacts with the E2 ubiquitin-conjugating enzyme UBE2D3. Component of the 4EHP-GYF2 complex, at least composed of EIF4E2, GIGYF2 and ZNF598.

Its subcellular location is the cytoplasm. The protein localises to the cytosol. The catalysed reaction is S-ubiquitinyl-[E2 ubiquitin-conjugating enzyme]-L-cysteine + [acceptor protein]-L-lysine = [E2 ubiquitin-conjugating enzyme]-L-cysteine + N(6)-ubiquitinyl-[acceptor protein]-L-lysine.. It participates in protein modification; protein ubiquitination. Its function is as follows. E3 ubiquitin-protein ligase that plays a key role in the ribosome quality control (RQC), a pathway that takes place when a ribosome has stalled during translation, leading to degradation of nascent peptide chains. ZNF598 is activated when ribosomes are stalled within an mRNA following translation of prematurely polyadenylated mRNAs. Acts as a ribosome collision sensor: specifically recognizes and binds collided di-ribosome, which arises when a trailing ribosome encounters a slower leading ribosome, leading to terminally arrest translation. Following binding to colliding ribosomes, mediates monoubiquitination of 40S ribosomal proteins RPS10/eS10 and RPS3/uS3, and 'Lys-63'-linked polyubiquitination of RPS20/uS10. Polyubiquitination of RPS20/uS10 promotes recruitment of the RQT (ribosome quality control trigger) complex, which drives the disassembly of stalled ribosomes, followed by degradation of nascent peptides. E3 ubiquitin-protein ligase activity is dependent on the E2 ubiquitin-conjugating enzyme UBE2D3. Also acts as an adapter that recruits the 4EHP-GYF2 complex to mRNAs. Independently of its role in RQC, may also act as a negative regulator of interferon-stimulated gene (ISG) expression. Functionally, (Microbial infection) Required for poxvirus protein synthesis by mediating ubiquitination of RPS10/eS10 and RPS20/uS10. Poxvirus encoding mRNAs contain unusual 5' poly(A) leaders and ZNF598 is required for their translational efficiency, possibly via its ability to suppress readthrough or sliding on shorter poly(A) tracts. This is E3 ubiquitin-protein ligase ZNF598 from Homo sapiens (Human).